A 1537-amino-acid polypeptide reads, in one-letter code: MFHKEAGISHLILDIILEHALNKFDPAPDRLQGAAKNFLPIIERFVAAGTRIEACLPAFPFKSANKVYKVLGSLPDKAEELALDRLNTMCARVREVYPPGLQVAIISDGITYNDTWAYGEALRQMAAQKQFMYIVFSRIKDLLDIPLPEQMSEIVYVANCTTFRRLLLNKYERADLDIDHEIASNPDTKLTYLGYRRFLESDLKYIFPRGAHRSAHSYKRDCKYLAKQMLIRGDAFAQAIKTSYPNHLRLSIHESVAGTKLSISLLNTKTGFTTPWHCSVAQLANGEWISAPMGEFRKDDRLELVYADGRPSHFREKPREGDAFGISESTASYLQRPKRLRASEYLGATLPSVPVSPGMSSPSAASTSSSGASMQGSAATTPETHSPPTFTWSGLEIVAEDNSNNASVPYGRRLIPQIMDSLAATEPERIVFSLATFSGDSLEFRPISARTFANAIDKTAWWLHNQVGRPDSIQPVGYIGPHDLRHVLLTYACVKAGYAALFLSPKNSTEGALAVLEATKCDLWINACDVSPVPLVKEVLQKRPMNVLQLPQLDELLDAVSTDPFPYTKKFDEAINDPFCFLHTSGTTGVPKPIPWSHGLIGTMDAVRLLPPGADGDLPPWTTDWKTGDTIYSSFPMSHGAGIIMNILMPALFNLHCVFGPAGVLPNINLVDALAVSTRIDIWSMVPSLVDELGETPAVLSKLKSSKFICASGGPVSPVSAGKVNEVIRVLNLTGTTEGLFMGNLIPPREDWFWFCFHPYSGFEFKQVEPDTYEHWVHRNEHWPLFQGIFHTFPEKQSINFKDLYVRHPTKPNLWAFKGRSDDLVTEAFITTHPAIKGCLVFGTGKPQAGLLIELKDPLQKTDELLDSIWETVQQANSMSRHKNQLLRDFVAFATPDKPFCRTDKGTVKRSATLKLYADYIERFYRSRNDDLGGTFDFDMSSAHSIEDNVRKILAASLPDVQEASADTDLFALGLDSLGVFAAIKTIRAATGLGDQIGPRHIYANPTIARLSAIIALLAAAAESASDTTLCERPVDDVGAQIARMIAQHKARQSFSLNAFDYVNPNHGMGLVLYFPIRDGVSYEQVFANLQAGLNRTFDLIPALSGKMTDCSEQGIGYTKGDLCVTIPPLAKADSARNRLVYKDLSAVLPSFDDLRKGGFAPSAFSDTLANFVSGGCILAVDLNHCCLDGLGAMVALKAWAENCRYLQGDQSATCGWYDPESFNHSLPEILHRQEGWARPLHEIDPGTWGFLPFFPPEDEETNPRCEKATEGSLPARPIFPLHPVWPLPRAERCLKTTMFLVTPEKLELLQQDVIADPATNGITPSISDIVQAFFWRAAIKARYRVATEIRKQKFSPDAVSILELPTDTRPHFSSRLPPTYMGSMLILNRTSMPIETLCSAETSIAKVALLLRQSAARITPSLVHDAFTLLQSLPGHRRFSTANMGLEHMHAMISNMLLFPTSEIGFGDAFFANGGVPETMRPQLERGNGRFRFLAVFPLRKDGGVELVLGTHREELEMLVTDEEFTRYARMVDTCC.

The interval 1–502 is isocyanide synthase domain; the sequence is MFHKEAGISH…CVKAGYAALF (502 aa). The interval 351 to 391 is disordered; it reads PSVPVSPGMSSPSAASTSSSGASMQGSAATTPETHSPPTFT. Positions 352–381 are enriched in low complexity; it reads SVPVSPGMSSPSAASTSSSGASMQGSAATT. Residues 382–391 show a composition bias toward polar residues; sequence PETHSPPTFT. Positions 573–752 are adenylation; that stretch reads EAINDPFCFL…GNLIPPREDW (180 aa). The 79-residue stretch at 941-1019 folds into the Carrier domain; that stretch reads SSAHSIEDNV…RLSAIIALLA (79 aa). Ser977 carries the post-translational modification O-(pantetheine 4'-phosphoryl)serine. Positions 1293–1526 are transferase; it reads RCLKTTMFLV…LEMLVTDEEF (234 aa).

It in the N-terminal section; belongs to the isocyanide synthase family. The protein in the C-terminal section; belongs to the NRP synthetase family.

The protein operates within secondary metabolite biosynthesis. Functionally, isocyanide synthase-NRPS hybrid; part of the crm gene cluster that mediates the biosynthesis of a yet unidentified copper-responsive metabolite. Converts valine into valine isocyanide that then contributes to two distinct biosynthetic pathways under copper-limiting conditions. Reaction of valine isocyanide with the imine intermediate of festuclavine results in formation of the amide bond in fumivaline A. In addition, valine isocyanide contributes to biosynthesis of a family of acylated sugar alcohols, the D-mannitol-derived fumicicolins. CrmA and associated products inhibit microbial growth from copper-starved A.fumigatus. In Aspergillus fumigatus (strain ATCC MYA-4609 / CBS 101355 / FGSC A1100 / Af293) (Neosartorya fumigata), this protein is Isocyanide synthase-NRPS hybrid crmA.